The following is a 201-amino-acid chain: Oligoribonuclease (201 aa).

In terms of domain architecture, Exonuclease spans 20–183 (LVWLDMEMTG…ADIHESIDEL (164 aa)). The active site involves Tyr-141.

This sequence belongs to the oligoribonuclease family.

It is found in the cytoplasm. Functionally, 3'-to-5' exoribonuclease specific for small oligoribonucleotides. This Burkholderia mallei (strain NCTC 10229) protein is Oligoribonuclease.